The sequence spans 319 residues: MVVLVDTVSSTPVRPRHPEKAARPDSLSPKKPDWIRVRAPTTRGYGETRSIVKENGLVTVCEEAGCPNIGECWDKKHATFMIMGDTCTRACAFCNVKTGLPGALDPNEPAYVAEATRKLGLEHLVITSVDRDDLADGGAAHFAATIRAVREHCPTTTIEILTPDFLRKDGALDVVVAAKPDVFNHNLETVPSRYLSVRPGARYFHSIRLLQRVKELDPTIFTKSGIMVGLGEERHEVLQVMDDLRSAEVDFLTIGQYLQPTRKHHAVMRYVTPDEFGGYGKTAYAKGFLMVSASPMTRSSHHAGDDFAKLRAARAALSR.

Positions 1 to 32 (MVVLVDTVSSTPVRPRHPEKAARPDSLSPKKP) are disordered. Residues 16 to 32 (RHPEKAARPDSLSPKKP) show a composition bias toward basic and acidic residues. [4Fe-4S] cluster-binding residues include Cys-61, Cys-66, Cys-72, Cys-87, Cys-91, Cys-94, and Ser-300. The region spanning 73 to 289 (WDKKHATFMI…GKTAYAKGFL (217 aa)) is the Radical SAM core domain.

It belongs to the radical SAM superfamily. Lipoyl synthase family. [4Fe-4S] cluster is required as a cofactor.

Its subcellular location is the cytoplasm. It catalyses the reaction [[Fe-S] cluster scaffold protein carrying a second [4Fe-4S](2+) cluster] + N(6)-octanoyl-L-lysyl-[protein] + 2 oxidized [2Fe-2S]-[ferredoxin] + 2 S-adenosyl-L-methionine + 4 H(+) = [[Fe-S] cluster scaffold protein] + N(6)-[(R)-dihydrolipoyl]-L-lysyl-[protein] + 4 Fe(3+) + 2 hydrogen sulfide + 2 5'-deoxyadenosine + 2 L-methionine + 2 reduced [2Fe-2S]-[ferredoxin]. It functions in the pathway protein modification; protein lipoylation via endogenous pathway; protein N(6)-(lipoyl)lysine from octanoyl-[acyl-carrier-protein]: step 2/2. Functionally, catalyzes the radical-mediated insertion of two sulfur atoms into the C-6 and C-8 positions of the octanoyl moiety bound to the lipoyl domains of lipoate-dependent enzymes, thereby converting the octanoylated domains into lipoylated derivatives. The polypeptide is Lipoyl synthase (Rhodopseudomonas palustris (strain BisB5)).